The primary structure comprises 209 residues: Glycolipid transfer protein B (209 aa).

2 tandem repeats follow at residues 45–55 (IKADITGNITK) and 56–66 (IRSVYESNPTQ). Positions 45 to 66 (IKADITGNITKIRSVYESNPTQ) are 2 X 12 AA approximate tandem repeats. 48–55 (DITGNITK) contributes to the beta-D-galactosyl-(1-&gt;4)-beta-D-glucosyl-(1&lt;-&gt;1)-N-[(9Z)-octadecenoyl]-sphing-4-enine binding site. Beta-D-galactosyl-(1-&gt;4)-beta-D-glucosyl-(1&lt;-&gt;1)-N-[(9Z)-octadecenoyl]-sphing-4-enine contacts are provided by His140 and Tyr207.

Belongs to the GLTP family.

It localises to the cytoplasm. In terms of biological role, accelerates the intermembrane transfer of various glycolipids. Catalyzes the transfer of various glycosphingolipids between membranes but does not catalyze the transfer of phospholipids. May be involved in the intracellular translocation of glucosylceramides. This Xenopus laevis (African clawed frog) protein is Glycolipid transfer protein B (gltp-b).